We begin with the raw amino-acid sequence, 1091 residues long: Voltage-dependent calcium channel subunit alpha-2/delta-3 (1091 aa).

The N-terminal stretch at 1 to 33 is a signal peptide; the sequence is MAGPGSLCCASRGASALLATALLYAALGDVVRS. Topologically, residues 34 to 1068 are extracellular; it reads EQQIPLSVVK…HPEENARECG (1035 aa). N166 is a glycosylation site (N-linked (GlcNAc...) asparagine). One can recognise a VWFA domain in the interval 256–438; it reads DVVILVDVSG…ENVMEYLHVL (183 aa). The a divalent metal cation site is built by D262, S264, and S266. An MIDAS-like motif motif is present at residues 262–266; the sequence is DVSGS. N-linked (GlcNAc...) asparagine glycosylation occurs at N309. Cysteines 412 and 1055 form a disulfide. The Cache domain occupies 452 to 549; sequence WTEAYIDSTL…RPLYEEGKKR (98 aa). 2 N-linked (GlcNAc...) asparagine glycosylation sites follow: N553 and N632. At Y924 the chain carries Phosphotyrosine. The helical transmembrane segment at 1069 to 1089 threads the bilayer; it reads GASSLQAQAALLLLPLVSSLF. Residues 1090 to 1091 are Cytoplasmic-facing; that stretch reads SR.

It belongs to the calcium channel subunit alpha-2/delta family. Dimer formed of alpha-2-2 and delta-2 chains; disulfide-linked. Voltage-dependent calcium channels are multisubunit complexes, consisting of alpha-1 (CACNA1), alpha-2 (CACNA2D), beta (CACNB) and delta (CACNA2D) subunits in a 1:1:1:1 ratio. In terms of processing, N-glycosylated. Post-translationally, may be proteolytically processed into subunits alpha-2-3 and delta-3 that are disulfide-linked. It is however unclear whether such cleavage really takes place in vivo and has a functional role. Brain-specific. Predominantly expressed in the caudate putamen, entorhinal complex, hippocampus and cortex.

It is found in the membrane. In terms of biological role, the alpha-2/delta subunit of voltage-dependent calcium channels regulates calcium current density and activation/inactivation kinetics of the calcium channel. Acts as a regulatory subunit for P/Q-type calcium channel (CACNA1A), N-type (CACNA1B), L-type (CACNA1C OR CACNA1D) but not T-type (CACNA1G). The sequence is that of Voltage-dependent calcium channel subunit alpha-2/delta-3 (Cacna2d3) from Mus musculus (Mouse).